A 508-amino-acid polypeptide reads, in one-letter code: Photosystem II CP47 reaction center protein (508 aa).

Transmembrane regions (helical) follow at residues 21–36, 101–115, 140–156, 203–218, 237–252, and 457–472; these read SVHI…WAGS, IVFS…IWHW, GIHL…FGAF, IAAG…FHLS, VLSS…AFVV, and SFAL…HGSR.

The protein belongs to the PsbB/PsbC family. PsbB subfamily. In terms of assembly, PSII is composed of 1 copy each of membrane proteins PsbA, PsbB, PsbC, PsbD, PsbE, PsbF, PsbH, PsbI, PsbJ, PsbK, PsbL, PsbM, PsbT, PsbX, PsbY, PsbZ, Psb30/Ycf12, at least 3 peripheral proteins of the oxygen-evolving complex and a large number of cofactors. It forms dimeric complexes. Binds multiple chlorophylls. PSII binds additional chlorophylls, carotenoids and specific lipids. is required as a cofactor.

The protein resides in the plastid. It is found in the chloroplast thylakoid membrane. In terms of biological role, one of the components of the core complex of photosystem II (PSII). It binds chlorophyll and helps catalyze the primary light-induced photochemical processes of PSII. PSII is a light-driven water:plastoquinone oxidoreductase, using light energy to abstract electrons from H(2)O, generating O(2) and a proton gradient subsequently used for ATP formation. The chain is Photosystem II CP47 reaction center protein from Lepidium virginicum (Virginia pepperweed).